The chain runs to 127 residues: Fluoride-specific ion channel FluC (127 aa).

4 consecutive transmembrane segments (helical) span residues 4 to 24, 35 to 55, 71 to 91, and 103 to 123; these read LLLAVFIGGGTGSVARWLLSM, LGTLTANLIGAFIIGIGFAWF, TGFCGGLTTFSTFSAEVVFLL, and VFVNLLGSFAMTALAFWLFSA. The Na(+) site is built by Gly75 and Thr78.

It belongs to the fluoride channel Fluc/FEX (TC 1.A.43) family.

The protein localises to the cell inner membrane. The catalysed reaction is fluoride(in) = fluoride(out). With respect to regulation, na(+) is not transported, but it plays an essential structural role and its presence is essential for fluoride channel function. In terms of biological role, fluoride-specific ion channel. Important for reducing fluoride concentration in the cell, thus reducing its toxicity. The sequence is that of Fluoride-specific ion channel FluC from Escherichia coli (strain K12 / MC4100 / BW2952).